A 199-amino-acid polypeptide reads, in one-letter code: Probable nicotinate-nucleotide adenylyltransferase (199 aa).

The protein belongs to the NadD family.

It catalyses the reaction nicotinate beta-D-ribonucleotide + ATP + H(+) = deamido-NAD(+) + diphosphate. Its pathway is cofactor biosynthesis; NAD(+) biosynthesis; deamido-NAD(+) from nicotinate D-ribonucleotide: step 1/1. Catalyzes the reversible adenylation of nicotinate mononucleotide (NaMN) to nicotinic acid adenine dinucleotide (NaAD). The chain is Probable nicotinate-nucleotide adenylyltransferase from Corynebacterium jeikeium (strain K411).